The sequence spans 248 residues: Large ribosomal subunit protein uL30 (248 aa).

A disordered region spans residues 22–42 (KSQEKARAERQAEIEKKKAAN). Basic and acidic residues predominate over residues 24–42 (QEKARAERQAEIEKKKAAN).

It belongs to the universal ribosomal protein uL30 family. As to quaternary structure, component of the large ribosomal subunit (LSU). Mature N.crassa ribosomes consist of a small (40S) and a large (60S) subunit. The 40S small subunit contains 1 molecule of ribosomal RNA (18S rRNA) and at least 32 different proteins. The large 60S subunit contains 3 rRNA molecules (26S, 5.8S and 5S rRNA) and at least 42 different proteins.

The protein resides in the cytoplasm. Its function is as follows. Component of the ribosome, a large ribonucleoprotein complex responsible for the synthesis of proteins in the cell. The small ribosomal subunit (SSU) binds messenger RNAs (mRNAs) and translates the encoded message by selecting cognate aminoacyl-transfer RNA (tRNA) molecules. The large subunit (LSU) contains the ribosomal catalytic site termed the peptidyl transferase center (PTC), which catalyzes the formation of peptide bonds, thereby polymerizing the amino acids delivered by tRNAs into a polypeptide chain. The nascent polypeptides leave the ribosome through a tunnel in the LSU and interact with protein factors that function in enzymatic processing, targeting, and the membrane insertion of nascent chains at the exit of the ribosomal tunnel. This Neurospora crassa (strain ATCC 24698 / 74-OR23-1A / CBS 708.71 / DSM 1257 / FGSC 987) protein is Large ribosomal subunit protein uL30 (rpl-7).